Reading from the N-terminus, the 201-residue chain is NAD(P)H dehydrogenase (quinone) (201 aa).

The 189-residue stretch at 4–192 (VLVLYYSSYG…TIARFQGQHI (189 aa)) folds into the Flavodoxin-like domain. Residues 10–15 (SSYGHV) and 80–82 (TRF) contribute to the FMN site. Tyr-12 is a binding site for NAD(+). Trp-100 is a substrate binding site. Residues 115-121 (STASQHG) and His-136 contribute to the FMN site.

The protein belongs to the WrbA family. It depends on FMN as a cofactor.

It carries out the reaction a quinone + NADH + H(+) = a quinol + NAD(+). The enzyme catalyses a quinone + NADPH + H(+) = a quinol + NADP(+). The sequence is that of NAD(P)H dehydrogenase (quinone) from Chromohalobacter salexigens (strain ATCC BAA-138 / DSM 3043 / CIP 106854 / NCIMB 13768 / 1H11).